The chain runs to 1165 residues: Tectonin beta-propeller repeat-containing protein 1 (1165 aa).

4 TECPR repeats span residues 209–240 (LSVWAVSLQGKVWYREDVSHSNPEGSSWSLLD), 254–285 (DLLWATLWEGQALVREGINRSNPKGSSWSIVE), 301–332 (SVVWAVTKDWKVWFRRGINSHNPCGTSWIEMV), and 344–376 (DQVWGIGCEDRAVYFRQGVTPSELSGKTWKAIV). The segment at 404-486 (RGSGESAPSD…GPATTPAELP (83 aa)) is disordered. The 107-residue stretch at 611–717 (KTGALQWWCD…WLALLSLSCC (107 aa)) folds into the PH domain. Residues 729–756 (QAIWSITCKGDIFVSEPSPDLEAHEHPL) form a TECPR 5 repeat. Ser938 and Ser949 each carry phosphoserine. TECPR repeat units lie at residues 953–984 (IALWAVSDKGDVLCRLGVSELNPAGSSWLHVG), 998–1029 (YQVWAVARDGSTFYRGSVYPSQPAGDCWYHIP), 1044–1075 (TSVYALDENGNLWYRQGITPSYPQGSSWEHVS), and 1087–1127 (DQVW…DYGI). The tract at residues 1140 to 1165 (ATRAPRSSSQEQEPSAPPEAHDPVCC) is disordered. Low complexity predominate over residues 1143–1153 (APRSSSQEQEP).

Belongs to the TECPR1 family. In terms of assembly, interacts with ATG5; the interaction is direct. Interacts with WIPI2. Interacts with the ATG5-ATG12 conjugate, the interaction is however mutually exclusive with ATG16, since it does not interact with ATG12-ATG5-ATG16 complex.

It localises to the cytoplasmic vesicle. It is found in the autophagosome membrane. Its subcellular location is the lysosome membrane. Tethering factor involved in autophagy. Involved in autophagosome maturation by promoting the autophagosome fusion with lysosomes: acts by associating with both the ATG5-ATG12 conjugate and phosphatidylinositol-3-phosphate (PtdIns(3)P) present at the surface of autophagosomes. Also involved in selective autophagy against bacterial pathogens, by being required for phagophore/preautophagosomal structure biogenesis and maturation. The chain is Tectonin beta-propeller repeat-containing protein 1 (TECPR1) from Pongo abelii (Sumatran orangutan).